The chain runs to 630 residues: Polygalacturonase-1 non-catalytic subunit beta (630 aa).

A signal peptide spans 1 to 27 (MHTKIHLPPCILLLLLFSLPSFNVVVG). A propeptide spanning residues 28-108 (GDGESGNPFT…MCAPDLSPSL (81 aa)) is cleaved from the precursor. N-linked (GlcNAc...) asparagine glycosylation is found at asparagine 124, asparagine 142, asparagine 256, asparagine 334, asparagine 369, and asparagine 387. The propeptide occupies 398–630 (EVNGGKKVNN…ENDMTWAIAD (233 aa)). Positions 415-629 (FFREKMLKSG…FENDMTWAIA (215 aa)) constitute a BURP domain.

Interacts with polygalacturonase-2 (isoenzymes PG2A and PG2B) to form heterodimers called polygalacturonase-1 (PG1). In terms of tissue distribution, mostly expressed in fruit pericarp. Also detected at low levels in cell wall of roots, leaves and flowers (at protein level).

It is found in the secreted. The protein localises to the extracellular space. It localises to the apoplast. The protein resides in the cell wall. In terms of biological role, non-catalytic subunit of the polygalacturonase isozyme 1 (PG1). Necessary and sufficient to convert the polygalacturonase from its monomeric form PG2 to its heterodimeric form PG1. Seems to limit the depolymerization and solubilization of cell wall polyuronides mediated by PG2 during ripening, probably by recruiting PG2 to form PG1. The protein is Polygalacturonase-1 non-catalytic subunit beta (GP1) of Solanum lycopersicum (Tomato).